Consider the following 462-residue polypeptide: Signal recognition particle protein (462 aa).

GTP is bound by residues 107–114 (GLQGAGKT), 190–194 (DTAGR), and 248–251 (TKVD).

It belongs to the GTP-binding SRP family. SRP54 subfamily. As to quaternary structure, part of the signal recognition particle protein translocation system, which is composed of SRP and FtsY. SRP is a ribonucleoprotein composed of Ffh and a 4.5S RNA molecule.

Its subcellular location is the cytoplasm. It carries out the reaction GTP + H2O = GDP + phosphate + H(+). Its function is as follows. Involved in targeting and insertion of nascent membrane proteins into the cytoplasmic membrane. Binds to the hydrophobic signal sequence of the ribosome-nascent chain (RNC) as it emerges from the ribosomes. The SRP-RNC complex is then targeted to the cytoplasmic membrane where it interacts with the SRP receptor FtsY. Interaction with FtsY leads to the transfer of the RNC complex to the Sec translocase for insertion into the membrane, the hydrolysis of GTP by both Ffh and FtsY, and the dissociation of the SRP-FtsY complex into the individual components. This is Signal recognition particle protein from Haemophilus influenzae (strain ATCC 51907 / DSM 11121 / KW20 / Rd).